The following is a 155-amino-acid chain: Small ribosomal subunit protein uS7cz/uS7cy (155 aa).

It belongs to the universal ribosomal protein uS7 family. In terms of assembly, part of the 30S ribosomal subunit.

Its subcellular location is the plastid. It localises to the chloroplast. In terms of biological role, one of the primary rRNA binding proteins, it binds directly to 16S rRNA where it nucleates assembly of the head domain of the 30S subunit. This chain is Small ribosomal subunit protein uS7cz/uS7cy (rps7-A), found in Crucihimalaya wallichii (Rock-cress).